The primary structure comprises 536 residues: Glutamyl-tRNA(Gln) amidotransferase subunit B, mitochondrial (536 aa).

Residues 1 to 8 (MLRVHRLY) constitute a mitochondrion transit peptide.

The protein belongs to the GatB/GatE family. GatB subfamily. Subunit of the heterotrimeric GatFAB amidotransferase (AdT) complex, composed of A, B and F subunits.

The protein localises to the mitochondrion. It catalyses the reaction L-glutamyl-tRNA(Gln) + L-glutamine + ATP + H2O = L-glutaminyl-tRNA(Gln) + L-glutamate + ADP + phosphate + H(+). Functionally, allows the formation of correctly charged Gln-tRNA(Gln) through the transamidation of misacylated Glu-tRNA(Gln) in the mitochondria. The reaction takes place in the presence of glutamine and ATP through an activated gamma-phospho-Glu-tRNA(Gln). The protein is Glutamyl-tRNA(Gln) amidotransferase subunit B, mitochondrial of Eremothecium gossypii (strain ATCC 10895 / CBS 109.51 / FGSC 9923 / NRRL Y-1056) (Yeast).